Consider the following 274-residue polypeptide: Chemotaxis protein methyltransferase 1 (274 aa).

A CheR-type methyltransferase domain is found at 1–274 (MSAANADFEL…CSPGIIYRAK (274 aa)). S-adenosyl-L-methionine is bound by residues asparagine 72, threonine 74, arginine 78, glutamate 115, aspartate 144, 200–201 (NL), and 217–218 (RN).

It catalyses the reaction L-glutamyl-[protein] + S-adenosyl-L-methionine = [protein]-L-glutamate 5-O-methyl ester + S-adenosyl-L-homocysteine. Methylation of the membrane-bound methyl-accepting chemotaxis proteins (MCP) to form gamma-glutamyl methyl ester residues in MCP. In Pseudomonas aeruginosa (strain ATCC 15692 / DSM 22644 / CIP 104116 / JCM 14847 / LMG 12228 / 1C / PRS 101 / PAO1), this protein is Chemotaxis protein methyltransferase 1 (cheR1).